A 163-amino-acid chain; its full sequence is Ribonuclease H (163 aa).

Residues 1–142 (MRKQVAIFTD…CDELARTAAC (142 aa)) enclose the RNase H type-1 domain. 4 residues coordinate Mg(2+): Asp10, Glu48, Asp70, and Asp134.

Belongs to the RNase H family. In terms of assembly, monomer. The cofactor is Mg(2+).

The protein localises to the cytoplasm. It catalyses the reaction Endonucleolytic cleavage to 5'-phosphomonoester.. Its function is as follows. Endonuclease that specifically degrades the RNA of RNA-DNA hybrids. This Sodalis glossinidius (strain morsitans) protein is Ribonuclease H.